Reading from the N-terminus, the 131-residue chain is Holo-[acyl-carrier-protein] synthase (131 aa).

Mg(2+)-binding residues include Asp8 and Glu63.

The protein belongs to the P-Pant transferase superfamily. AcpS family. The cofactor is Mg(2+).

It localises to the cytoplasm. It catalyses the reaction apo-[ACP] + CoA = holo-[ACP] + adenosine 3',5'-bisphosphate + H(+). Functionally, transfers the 4'-phosphopantetheine moiety from coenzyme A to a Ser of acyl-carrier-protein. The chain is Holo-[acyl-carrier-protein] synthase from Shewanella halifaxensis (strain HAW-EB4).